Consider the following 609-residue polypeptide: MNMMTSSILMILILLTTPIIISMTNLPKLIDFPSYATSSIKFSFLLSLLPLLLFFHHNTEYMITNWHWLTINSIKLTMSFKIDYFSILFLSVALFVTWSIMQFSSWYMHSDPHINRFIKYLMMFLITMLILTSANNLFQLFIGWEGVGIMSFLLIGWWYGRADANTAALQAILYNRVGDIGFILAMTWFCLNMNSWELQQIFLTNTNNLVPLTGLLIAATGKSAQFGLHPWLPSAMEGPTPVSALLHSSTMVVAGIFLMIRFHPLTSNNSTIMTAMLCLGAITTLFTAICALTQNDIKKIVAFSTSSQLGLMMVTLGINQPYLAFLHICTHAFFKAMLFMCSGSIIHSLNDEQDIRKMGNMMKAMPFTSSCLIIGSLALTGMPFLTGFYSKDLIIEAINTCNTNAWALMITLIATSMTAVYSMRIIYFVTMTKPRYSPLITINENNPNLINPIKRLALGSILAGFLISLNIPPTNIQILTMPWHLKMTALLITILGFAIALELNNLTLNLSMSKPTKLSSFSTSLGYYPPIMHRIIPQKTLNSSYKLSLNLLDLIWLEKTIPKSTSITQTQLSKMMSNQKGLIKLYFLSFLITISLIFILHTLNPEWFQ.

15 consecutive transmembrane segments (helical) span residues 6–26 (SSILMILILLTTPIIISMTNL), 35–55 (YATSSIKFSFLLSLLPLLLFF), 84–104 (YFSILFLSVALFVTWSIMQFS), 116–138 (RFIKYLMMFLITMLILTSANNLF), 140–160 (LFIGWEGVGIMSFLLIGWWYG), 171–191 (AILYNRVGDIGFILAMTWFCL), 240–260 (TPVSALLHSSTMVVAGIFLMI), 272–292 (IMTAMLCLGAITTLFTAICAL), 300–319 (IVAFSTSSQLGLMMVTLGIN), 330–350 (THAFFKAMLFMCSGSIIHSLN), 365–385 (MPFTSSCLIIGSLALTGMPFL), 409–429 (MITLIATSMTAVYSMRIIYFV), 456–476 (LALGSILAGFLISLNIPPTNI), 481–501 (MPWHLKMTALLITILGFAIAL), and 581–601 (GLIKLYFLSFLITISLIFILH).

It belongs to the complex I subunit 5 family. As to quaternary structure, core subunit of respiratory chain NADH dehydrogenase (Complex I) which is composed of 45 different subunits.

The protein localises to the mitochondrion inner membrane. It catalyses the reaction a ubiquinone + NADH + 5 H(+)(in) = a ubiquinol + NAD(+) + 4 H(+)(out). Core subunit of the mitochondrial membrane respiratory chain NADH dehydrogenase (Complex I) which catalyzes electron transfer from NADH through the respiratory chain, using ubiquinone as an electron acceptor. Essential for the catalytic activity and assembly of complex I. This Rattus norvegicus (Rat) protein is NADH-ubiquinone oxidoreductase chain 5.